The following is a 1177-amino-acid chain: Transcription-repair-coupling factor (1177 aa).

The 162-residue stretch at 638-799 (DMERERPMDR…MLGVRDLSVI (162 aa)) folds into the Helicase ATP-binding domain. Residue 651–658 (GDVGYGKT) coordinates ATP. The DEEQ box motif lies at 752-755 (DEEQ). The Helicase C-terminal domain maps to 820–974 (LVREAIEREL…GFKIAMRDLT (155 aa)).

The protein in the N-terminal section; belongs to the UvrB family. In the C-terminal section; belongs to the helicase family. RecG subfamily.

Its subcellular location is the cytoplasm. In terms of biological role, couples transcription and DNA repair by recognizing RNA polymerase (RNAP) stalled at DNA lesions. Mediates ATP-dependent release of RNAP and its truncated transcript from the DNA, and recruitment of nucleotide excision repair machinery to the damaged site. Probably required to repair non-bulky DNA lesions. This chain is Transcription-repair-coupling factor, found in Bacillus subtilis (strain 168).